Here is a 147-residue protein sequence, read N- to C-terminus: Small ribosomal subunit protein bS16m (147 aa).

Belongs to the bacterial ribosomal protein bS16 family. As to quaternary structure, component of the mitochondrial ribosome small subunit (28S) which comprises a 12S rRNA and about 30 distinct proteins.

The protein resides in the mitochondrion. The polypeptide is Small ribosomal subunit protein bS16m (mrps-16) (Caenorhabditis elegans).